Here is a 202-residue protein sequence, read N- to C-terminus: Probable cytochrome c oxidase subunit 3 (202 aa).

5 helical membrane-spanning segments follow: residues 30 to 50 (VVWLSSELMFFAGLFAMYFTA), 69 to 89 (AVPVTLVLIASSFTCQMGVFS), 101 to 121 (WYVITLLMGLFFVLGQGYEYY), 141 to 161 (LATGFHGLHVTGGLIAFIFLL), and 178 to 198 (IVVSYYWHFVDIVWIALFTVI).

It belongs to the cytochrome c oxidase subunit 3 family.

It is found in the cell membrane. It carries out the reaction 4 Fe(II)-[cytochrome c] + O2 + 8 H(+)(in) = 4 Fe(III)-[cytochrome c] + 2 H2O + 4 H(+)(out). In Mycobacterium leprae (strain TN), this protein is Probable cytochrome c oxidase subunit 3 (ctaE).